Here is a 465-residue protein sequence, read N- to C-terminus: ATP synthase subunit beta (465 aa).

148–155 is a binding site for ATP; the sequence is GGAGVGKT.

This sequence belongs to the ATPase alpha/beta chains family. In terms of assembly, F-type ATPases have 2 components, CF(1) - the catalytic core - and CF(0) - the membrane proton channel. CF(1) has five subunits: alpha(3), beta(3), gamma(1), delta(1), epsilon(1). CF(0) has three main subunits: a(1), b(2) and c(9-12). The alpha and beta chains form an alternating ring which encloses part of the gamma chain. CF(1) is attached to CF(0) by a central stalk formed by the gamma and epsilon chains, while a peripheral stalk is formed by the delta and b chains.

The protein localises to the cell inner membrane. It carries out the reaction ATP + H2O + 4 H(+)(in) = ADP + phosphate + 5 H(+)(out). Its function is as follows. Produces ATP from ADP in the presence of a proton gradient across the membrane. The catalytic sites are hosted primarily by the beta subunits. The chain is ATP synthase subunit beta from Neisseria gonorrhoeae (strain ATCC 700825 / FA 1090).